Here is a 249-residue protein sequence, read N- to C-terminus: Capsid protein (249 aa).

The segment at 1 to 33 is disordered; sequence MDTDGDNDVFGSGNDTRNNDDKKKEEMKQNISD. The segment covering 17-28 has biased composition (basic and acidic residues); it reads RNNDDKKKEEMK.

The protein belongs to the closteroviridae capsid protein family.

The protein resides in the virion. Its function is as follows. Capsid protein self-assembles to form filamentous capsids, about 650-850 nm in length. This chain is Capsid protein, found in Beta vulgaris (Sugar beet).